The primary structure comprises 453 residues: Probable glucan endo-1,3-beta-glucosidase eglC (453 aa).

The N-terminal stretch at 1–18 (MQTRQLLALALAVAATEA) is a signal peptide. Glutamate 128 serves as the catalytic Proton donor. An N-linked (GlcNAc...) asparagine glycan is attached at asparagine 183. The Nucleophile role is filled by glutamate 239. Asparagine 364, asparagine 368, and asparagine 376 each carry an N-linked (GlcNAc...) asparagine glycan. The span at 370 to 380 (TYPGSWNSTRP) shows a compositional bias: polar residues. Residues 370 to 423 (TYPGSWNSTRPGANGGSSGSSGSSGSSGSSGSSGSSGSGASGHSSSTGSSSFPS) form a disordered region. 2 stretches are compositionally biased toward low complexity: residues 389-402 (SSGS…SGSS) and 410-423 (SGHS…SFPS). Asparagine 430 carries GPI-anchor amidated asparagine lipidation. Residues 431–453 (SASGLSGSLFGAVAAVFVALAAL) constitute a propeptide, removed in mature form.

This sequence belongs to the glycosyl hydrolase 17 family. The GPI-anchor is attached to the protein in the endoplasmic reticulum and serves to target the protein to the cell surface. There, the glucosamine-inositol phospholipid moiety is cleaved off and the GPI-modified mannoprotein is covalently attached via its lipidless GPI glycan remnant to the 1,6-beta-glucan of the outer cell wall layer.

It is found in the cell membrane. The protein localises to the secreted. The protein resides in the cell wall. The enzyme catalyses Hydrolysis of (1-&gt;3)-beta-D-glucosidic linkages in (1-&gt;3)-beta-D-glucans.. Glucanases play a role in cell expansion during growth, in cell-cell fusion during mating, and in spore release during sporulation. This enzyme may be involved in beta-glucan degradation and also function biosynthetically as a transglycosylase. The polypeptide is Probable glucan endo-1,3-beta-glucosidase eglC (eglC) (Aspergillus clavatus (strain ATCC 1007 / CBS 513.65 / DSM 816 / NCTC 3887 / NRRL 1 / QM 1276 / 107)).